The chain runs to 508 residues: Monocarboxylate transporter 9 (508 aa).

At 1 to 12 the chain is on the cytoplasmic side; the sequence is MEFQKSPDGGWG. A run of 12 helical transmembrane segments spans residues 13–33, 53–73, 80–100, 102–122, 137–157, 164–184, 303–323, 341–361, 370–390, 396–416, 431–451, and 460–480; these read WVIVVVSFFTQFLSYGSPLAV, WVGSLASGVGLLASPVCSLFV, PVTIFSGFLVAGGLMLSSLAP, IYFLFFSYGIVVGLGCGLLYT, GLALGLISTGSSVGLFIYAAL, FYGLDGCLLIVGALALNILAC, VFSALFIAILLFDIGGFPPSL, MPLISIFGIMTAVGKLLLGIL, LYLYVATLIITGLALCAIPFA, LAILSGILGFLTGNWSIFPYV, GILMFFAGLGNSLGPPIVGWF, and IAFYFSGFCVLLGGFILLLAI. Residues 481–508 are Cytoplasmic-facing; that stretch reads LPCWDMCNKKLPKPAVPTTFFYKVASNV.

It belongs to the major facilitator superfamily. Monocarboxylate porter (TC 2.A.1.13) family.

It is found in the cell membrane. It catalyses the reaction creatine(in) = creatine(out). It carries out the reaction (R)-carnitine(in) = (R)-carnitine(out). Its function is as follows. Extracellular pH-and Na(+)-sensitive low-affinity creatine transporter. Also functions as a pH-independent carnitine efflux transporter. This Mus musculus (Mouse) protein is Monocarboxylate transporter 9 (Slc16a9).